A 145-amino-acid polypeptide reads, in one-letter code: uncharacterized protein (145 aa).

This is an uncharacterized protein from Deinococcus radiodurans (strain ATCC 13939 / DSM 20539 / JCM 16871 / CCUG 27074 / LMG 4051 / NBRC 15346 / NCIMB 9279 / VKM B-1422 / R1).